Here is a 48-residue protein sequence, read N- to C-terminus: Large ribosomal subunit protein bL33A (48 aa).

Belongs to the bacterial ribosomal protein bL33 family.

This chain is Large ribosomal subunit protein bL33A, found in Metamycoplasma arthritidis (strain 158L3-1) (Mycoplasma arthritidis).